We begin with the raw amino-acid sequence, 413 residues long: Eukaryotic initiation factor 4A-8 (413 aa).

A Q motif motif is present at residues 40 to 68 (DSFDAMGLQENLLRGIYAYGFEKPSAIQQ). The Helicase ATP-binding domain occupies 71-241 (IVPFCKGLDV…RKFMNKPVRI (171 aa)). 84–91 (AQSGTGKT) is an ATP binding site. Positions 189-192 (DEAD) match the DEAD box motif. The 162-residue stretch at 252–413 (GIKQFYVNVD…ELPSNVADLL (162 aa)) folds into the Helicase C-terminal domain.

It belongs to the DEAD box helicase family. eIF4A subfamily. In terms of assembly, eIF4F is a multi-subunit complex, the composition of which varies with external and internal environmental conditions. It is composed of at least EIF4A, EIF4E and EIF4G. In terms of tissue distribution, pollen specific.

It carries out the reaction ATP + H2O = ADP + phosphate + H(+). ATP-dependent RNA helicase which is a subunit of the eIF4F complex involved in cap recognition and is required for mRNA binding to ribosome. In the current model of translation initiation, eIF4A unwinds RNA secondary structures in the 5'-UTR of mRNAs which is necessary to allow efficient binding of the small ribosomal subunit, and subsequent scanning for the initiator codon. The protein is Eukaryotic initiation factor 4A-8 of Nicotiana tabacum (Common tobacco).